Here is a 277-residue protein sequence, read N- to C-terminus: 3-methyl-2-oxobutanoate hydroxymethyltransferase (277 aa).

Positions 43 and 82 each coordinate Mg(2+). 3-methyl-2-oxobutanoate-binding positions include 43–44 (DS), Asp-82, and Lys-112. Glu-114 contacts Mg(2+). Glu-181 functions as the Proton acceptor in the catalytic mechanism.

The protein belongs to the PanB family. As to quaternary structure, homodecamer; pentamer of dimers. It depends on Mg(2+) as a cofactor.

Its subcellular location is the cytoplasm. It catalyses the reaction 3-methyl-2-oxobutanoate + (6R)-5,10-methylene-5,6,7,8-tetrahydrofolate + H2O = 2-dehydropantoate + (6S)-5,6,7,8-tetrahydrofolate. The protein operates within cofactor biosynthesis; (R)-pantothenate biosynthesis; (R)-pantoate from 3-methyl-2-oxobutanoate: step 1/2. In terms of biological role, catalyzes the reversible reaction in which hydroxymethyl group from 5,10-methylenetetrahydrofolate is transferred onto alpha-ketoisovalerate to form ketopantoate. The sequence is that of 3-methyl-2-oxobutanoate hydroxymethyltransferase from Bacillus subtilis (strain 168).